Here is a 57-residue protein sequence, read N- to C-terminus: Protein GnsB (57 aa).

This sequence belongs to the gns family.

Functionally, overexpression increases levels of unsaturated fatty acids and suppresses both the temperature-sensitive fabA6 mutation and cold-sensitive secG null mutation. In Escherichia coli (strain K12), this protein is Protein GnsB (gnsB).